The chain runs to 413 residues: Putative glutamate--cysteine ligase 2 (413 aa).

Residues Gly-392 to His-413 are disordered.

It belongs to the glutamate--cysteine ligase type 2 family. YbdK subfamily.

The enzyme catalyses L-cysteine + L-glutamate + ATP = gamma-L-glutamyl-L-cysteine + ADP + phosphate + H(+). In terms of biological role, ATP-dependent carboxylate-amine ligase which exhibits weak glutamate--cysteine ligase activity. This chain is Putative glutamate--cysteine ligase 2, found in Bordetella bronchiseptica (strain ATCC BAA-588 / NCTC 13252 / RB50) (Alcaligenes bronchisepticus).